The following is a 379-amino-acid chain: Cytochrome b (379 aa).

4 helical membrane-spanning segments follow: residues Phe-33 to Met-53, Trp-77 to Ile-98, Trp-113 to Leu-133, and Phe-178 to Leu-198. The heme b site is built by His-83 and His-97. Positions 182 and 196 each coordinate heme b. His-201 serves as a coordination point for a ubiquinone. A run of 4 helical transmembrane segments spans residues Tyr-226–Tyr-246, Leu-288–His-308, Ala-320–Gly-340, and Tyr-347–Pro-367.

The protein belongs to the cytochrome b family. The cytochrome bc1 complex contains 3 respiratory subunits (MT-CYB, CYC1 and UQCRFS1), 2 core proteins (UQCRC1 and UQCRC2) and probably 6 low-molecular weight proteins. Requires heme b as cofactor.

The protein resides in the mitochondrion inner membrane. Functionally, component of the ubiquinol-cytochrome c reductase complex (complex III or cytochrome b-c1 complex) that is part of the mitochondrial respiratory chain. The b-c1 complex mediates electron transfer from ubiquinol to cytochrome c. Contributes to the generation of a proton gradient across the mitochondrial membrane that is then used for ATP synthesis. This Anguilla dieffenbachii (New Zealand longfin eel) protein is Cytochrome b (mt-cyb).